Consider the following 286-residue polypeptide: D-tagatose-1,6-bisphosphate aldolase subunit KbaY (286 aa).

Aspartate 82 serves as the catalytic Proton donor. Residues histidine 83 and histidine 180 each contribute to the Zn(2+) site. Glycine 181 contributes to the dihydroxyacetone phosphate binding site. Histidine 208 serves as a coordination point for Zn(2+). Dihydroxyacetone phosphate is bound by residues 209–211 and 230–233; these read GAS and NVAT.

It belongs to the class II fructose-bisphosphate aldolase family. TagBP aldolase KbaY subfamily. As to quaternary structure, homotetramer. Forms a complex with KbaZ. It depends on Zn(2+) as a cofactor.

The catalysed reaction is D-tagatofuranose 1,6-bisphosphate = D-glyceraldehyde 3-phosphate + dihydroxyacetone phosphate. Its pathway is carbohydrate metabolism; D-tagatose 6-phosphate degradation; D-glyceraldehyde 3-phosphate and glycerone phosphate from D-tagatose 6-phosphate: step 2/2. Its function is as follows. Catalytic subunit of the tagatose-1,6-bisphosphate aldolase KbaYZ, which catalyzes the reversible aldol condensation of dihydroxyacetone phosphate (DHAP or glycerone-phosphate) with glyceraldehyde 3-phosphate (G3P) to produce tagatose 1,6-bisphosphate (TBP). Requires KbaZ subunit for full activity and stability. Is involved in the catabolism of N-acetylgalactosamine and D-galactosamine. The polypeptide is D-tagatose-1,6-bisphosphate aldolase subunit KbaY (kbaY) (Escherichia coli).